Here is a 242-residue protein sequence, read N- to C-terminus: Synaptonemal complex central element protein 1-like (242 aa).

Residues 1–24 (MAGKLKPLNVEAPEATEEAEGQAK) are disordered. A coiled-coil region spans residues 44–181 (LEPQIEDLIS…LREVERRLHS (138 aa)). Residues 206-242 (VRSAPEVGAGEGEAGPELPRARDEEDPEPPVAAPDAL) form a disordered region.

It belongs to the SYCE family.

May be involved in meiosis. The sequence is that of Synaptonemal complex central element protein 1-like (SYCE1L) from Homo sapiens (Human).